A 355-amino-acid polypeptide reads, in one-letter code: Putative inositol monophosphatase 3 (355 aa).

A helical transmembrane segment spans residues 16-36; the sequence is VPATIFAILLTIVLVYFLNFH. Mg(2+) is bound by residues E127, D167, L169, D170, and D292. E127 is a substrate binding site. Substrate-binding positions include 169 to 172 and D292; that span reads LDAT.

This sequence belongs to the inositol monophosphatase superfamily. Mg(2+) is required as a cofactor.

The protein resides in the membrane. It carries out the reaction a myo-inositol phosphate + H2O = myo-inositol + phosphate. The protein operates within polyol metabolism; myo-inositol biosynthesis; myo-inositol from D-glucose 6-phosphate: step 2/2. The chain is Putative inositol monophosphatase 3 from Drosophila pseudoobscura pseudoobscura (Fruit fly).